The chain runs to 402 residues: MPEVKVLAVRELTAYLQRLLANDGRLANVWVKGEISNLRSPTSGHLYFSLKDQAATLRCVMFQGRSRGLSLGLRDGLEVIARGQVAIYPRDGVYQLYVAEIFPAGTGLASLALQELTARLEREGLFAADRKRPLPLLPRRVGLVTSPTGAALRDMITISRRRFPGIELILAPARVQGEVAPRQLALALELLAKRGGVDVIIIGRGGGSAEDLSAFNTELVARAIYACPVPVIAAVGHETDLTLADRVADRRAPTPSAAAEMAVPVRAELEQRLKSLAERARRGMEHRLELARARLERLTKSSGLDRPRQELYYRQQYVDGLEQRLLASWERRSREREQGLNLLAARLEAASPLAILARGYAVCRRPGDGAPLKSSREVLPGEKVEVILKEGLLRCQVEEVGG.

It belongs to the XseA family. Heterooligomer composed of large and small subunits.

The protein resides in the cytoplasm. It carries out the reaction Exonucleolytic cleavage in either 5'- to 3'- or 3'- to 5'-direction to yield nucleoside 5'-phosphates.. In terms of biological role, bidirectionally degrades single-stranded DNA into large acid-insoluble oligonucleotides, which are then degraded further into small acid-soluble oligonucleotides. This Moorella thermoacetica (strain ATCC 39073 / JCM 9320) protein is Exodeoxyribonuclease 7 large subunit.